The sequence spans 189 residues: Peptidyl-tRNA hydrolase (189 aa).

Tyr-14 is a binding site for tRNA. The active-site Proton acceptor is the His-19. The tRNA site is built by Tyr-64, Asn-66, and Asn-112.

This sequence belongs to the PTH family. In terms of assembly, monomer.

Its subcellular location is the cytoplasm. It catalyses the reaction an N-acyl-L-alpha-aminoacyl-tRNA + H2O = an N-acyl-L-amino acid + a tRNA + H(+). Its function is as follows. Hydrolyzes ribosome-free peptidyl-tRNAs (with 1 or more amino acids incorporated), which drop off the ribosome during protein synthesis, or as a result of ribosome stalling. Catalyzes the release of premature peptidyl moieties from peptidyl-tRNA molecules trapped in stalled 50S ribosomal subunits, and thus maintains levels of free tRNAs and 50S ribosomes. The sequence is that of Peptidyl-tRNA hydrolase from Dehalococcoides mccartyi (strain ATCC BAA-2266 / KCTC 15142 / 195) (Dehalococcoides ethenogenes (strain 195)).